A 235-amino-acid chain; its full sequence is Small ribosomal subunit protein uS2c (235 aa).

The protein belongs to the universal ribosomal protein uS2 family.

Its subcellular location is the plastid. It is found in the chloroplast. This chain is Small ribosomal subunit protein uS2c (rps2), found in Cryptomeria japonica (Japanese cedar).